Reading from the N-terminus, the 162-residue chain is MDEQEPAPKRGRRFKEQTPVQRALGLLVRREHSRKELNRKLLARGIEPDAAQAAVDRLTDEGWQDDTRFAAAVVRNRAGSGYGPLHIRAELGTHGLDSEAISAALAAFEGDWTENARDLIRRRFGEQGPTDLPQRRKAADLLARRGFEGNSIRAATRFDLED.

This sequence belongs to the RecX family.

It localises to the cytoplasm. Functionally, modulates RecA activity. In Xanthomonas axonopodis pv. citri (strain 306), this protein is Regulatory protein RecX.